The following is a 185-amino-acid chain: Disulfide bond formation protein B (185 aa).

The Cytoplasmic portion of the chain corresponds to 1-25 (MLLFFVILGIFVLTILKAISKQRWS). The chain crosses the membrane as a helical span at residues 26-42 (WLLLAASALSLELSALY). Residues 43-60 (FQHVMQLEPCVMCVYERL) lie on the Periplasmic side of the membrane. A disulfide bond links Cys-52 and Cys-55. The chain crosses the membrane as a helical span at residues 61–76 (AMLGILLAGLIGASSP). Residues 77–83 (NNVFIRL) are Cytoplasmic-facing. The chain crosses the membrane as a helical span at residues 84–101 (SAFLLWGISAVWGILLAI). Over 102 to 156 (KHTDYQLHPSPFFTCDFFPNFPAWAPLHEWLPWLFNPTGDCSDIVWQFLGYSMPQ) the chain is Periplasmic. Cys-116 and Cys-142 are disulfide-bonded. Residues 157-175 (WLIVSFSLYTLLFIIFAIS) form a helical membrane-spanning segment. Over 176–185 (AVLKTKKQLF) the chain is Cytoplasmic.

The protein belongs to the DsbB family.

It localises to the cell inner membrane. Its function is as follows. Required for disulfide bond formation in some periplasmic proteins. Acts by oxidizing the DsbA protein. This chain is Disulfide bond formation protein B, found in Psychromonas ingrahamii (strain DSM 17664 / CCUG 51855 / 37).